The chain runs to 305 residues: UDP-3-O-acyl-N-acetylglucosamine deacetylase (305 aa).

Positions 78, 237, and 241 each coordinate Zn(2+). The active-site Proton donor is the His-264.

This sequence belongs to the LpxC family. The cofactor is Zn(2+).

The enzyme catalyses a UDP-3-O-[(3R)-3-hydroxyacyl]-N-acetyl-alpha-D-glucosamine + H2O = a UDP-3-O-[(3R)-3-hydroxyacyl]-alpha-D-glucosamine + acetate. It participates in glycolipid biosynthesis; lipid IV(A) biosynthesis; lipid IV(A) from (3R)-3-hydroxytetradecanoyl-[acyl-carrier-protein] and UDP-N-acetyl-alpha-D-glucosamine: step 2/6. Functionally, catalyzes the hydrolysis of UDP-3-O-myristoyl-N-acetylglucosamine to form UDP-3-O-myristoylglucosamine and acetate, the committed step in lipid A biosynthesis. The polypeptide is UDP-3-O-acyl-N-acetylglucosamine deacetylase (Burkholderia multivorans (strain ATCC 17616 / 249)).